The primary structure comprises 264 residues: Exosome complex component Rrp4 (264 aa).

Residues 65 to 137 (GDNVLGKIVD…EVNNIELTTK (73 aa)) form the S1 motif domain. The region spanning 147–206 (RGGQIIKITSSKVPRVIGKGGSMINMIKKLTQSRIIVGQNGWIWISSKNPELEKLAIEAI) is the KH domain. A compositionally biased stretch (acidic residues) spans 244–258 (SLEEETQEETVMEND). Positions 244-264 (SLEEETQEETVMENDVEARGP) are disordered.

It belongs to the RRP4 family. As to quaternary structure, component of the archaeal exosome complex. Forms a trimer of Rrp4 and/or Csl4 subunits. The trimer associates with a hexameric ring-like arrangement composed of 3 Rrp41-Rrp42 heterodimers.

The protein localises to the cytoplasm. Functionally, non-catalytic component of the exosome, which is a complex involved in RNA degradation. Increases the RNA binding and the efficiency of RNA degradation. Confers strong poly(A) specificity to the exosome. This chain is Exosome complex component Rrp4, found in Pyrococcus furiosus (strain ATCC 43587 / DSM 3638 / JCM 8422 / Vc1).